We begin with the raw amino-acid sequence, 453 residues long: MIYILKNFIIILFFLLIILKRIESQSLPSLPSPTIYKSSQCRGDLVYRNVSNRMEDEKIGFTFVQYNGTYQSCVIPCPSPFFTLDEWNKFLYMSLVMGTISFLCGLFLLITYSPIVNKTHNRHTIGVMCMSFGVCLAMCSDMWNFGSNFTDQKSICPSPGQYLTTSNSRCLGSGIVLQFGGVFGFLNWTLLSFDLFMNIKGIITKNYDKYYFVATFIIAIIFTFVPIVNDQYSMSYIGLGCWLGSAVYQLIFFWILLSICLIVSSVFIILILKEIYIIIKQSKQKTSLKGNIRPLLCITVTSFAFFYMFFYYISIVIEGDYYERILNEYTDCLMDPTKDVSECKFPRMSVANEFVFLLCLRLLGIGAFIFYGINKEVKKIWLNSFWFNNSFVGKYIGSKRSMGNDITNSYASKAYSKNYNNNNSINSYNSGLELSIIDMSCNKDDNFKPIIIK.

Residues 1 to 24 form the signal peptide; that stretch reads MIYILKNFIIILFFLLIILKRIES. The Extracellular segment spans residues 25–89; it reads QSLPSLPSPT…PFFTLDEWNK (65 aa). N-linked (GlcNAc...) asparagine glycans are attached at residues asparagine 49 and asparagine 67. The helical transmembrane segment at 90-110 threads the bilayer; that stretch reads FLYMSLVMGTISFLCGLFLLI. Residues 111 to 124 are Cytoplasmic-facing; that stretch reads TYSPIVNKTHNRHT. Residues 125-145 traverse the membrane as a helical segment; the sequence is IGVMCMSFGVCLAMCSDMWNF. The Extracellular portion of the chain corresponds to 146-170; that stretch reads GSNFTDQKSICPSPGQYLTTSNSRC. Residue asparagine 148 is glycosylated (N-linked (GlcNAc...) asparagine). The chain crosses the membrane as a helical span at residues 171-191; sequence LGSGIVLQFGGVFGFLNWTLL. The Cytoplasmic segment spans residues 192 to 209; it reads SFDLFMNIKGIITKNYDK. A helical membrane pass occupies residues 210-230; sequence YYFVATFIIAIIFTFVPIVND. Over 231 to 250 the chain is Extracellular; that stretch reads QYSMSYIGLGCWLGSAVYQL. The chain crosses the membrane as a helical span at residues 251–271; that stretch reads IFFWILLSICLIVSSVFIILI. The Cytoplasmic segment spans residues 272–296; it reads LKEIYIIIKQSKQKTSLKGNIRPLL. Residues 297–317 traverse the membrane as a helical segment; the sequence is CITVTSFAFFYMFFYYISIVI. At 318–352 the chain is on the extracellular side; that stretch reads EGDYYERILNEYTDCLMDPTKDVSECKFPRMSVAN. The chain crosses the membrane as a helical span at residues 353 to 373; sequence EFVFLLCLRLLGIGAFIFYGI. Over 374–453 the chain is Cytoplasmic; that stretch reads NKEVKKIWLN…DDNFKPIIIK (80 aa).

The protein belongs to the G-protein coupled receptor Fz/Smo family.

The protein localises to the membrane. The polypeptide is Frizzled/smoothened-like sans CRD protein G (fscG) (Dictyostelium discoideum (Social amoeba)).